The primary structure comprises 374 residues: Queuine tRNA-ribosyltransferase (374 aa).

Residue Asp91 is the Proton acceptor of the active site. Substrate-binding positions include 91-95 (DSGGY), Asp145, Gln189, and Gly216. The interval 247–253 (GVGTVPD) is RNA binding. Asp266 acts as the Nucleophile in catalysis. The tract at residues 271 to 275 (TRNAR) is RNA binding; important for wobble base 34 recognition. Zn(2+) contacts are provided by Cys304, Cys306, Cys309, and His335.

It belongs to the queuine tRNA-ribosyltransferase family. In terms of assembly, homodimer. Within each dimer, one monomer is responsible for RNA recognition and catalysis, while the other monomer binds to the replacement base PreQ1. Zn(2+) is required as a cofactor.

The catalysed reaction is 7-aminomethyl-7-carbaguanine + guanosine(34) in tRNA = 7-aminomethyl-7-carbaguanosine(34) in tRNA + guanine. It participates in tRNA modification; tRNA-queuosine biosynthesis. Catalyzes the base-exchange of a guanine (G) residue with the queuine precursor 7-aminomethyl-7-deazaguanine (PreQ1) at position 34 (anticodon wobble position) in tRNAs with GU(N) anticodons (tRNA-Asp, -Asn, -His and -Tyr). Catalysis occurs through a double-displacement mechanism. The nucleophile active site attacks the C1' of nucleotide 34 to detach the guanine base from the RNA, forming a covalent enzyme-RNA intermediate. The proton acceptor active site deprotonates the incoming PreQ1, allowing a nucleophilic attack on the C1' of the ribose to form the product. After dissociation, two additional enzymatic reactions on the tRNA convert PreQ1 to queuine (Q), resulting in the hypermodified nucleoside queuosine (7-(((4,5-cis-dihydroxy-2-cyclopenten-1-yl)amino)methyl)-7-deazaguanosine). This Leptospira borgpetersenii serovar Hardjo-bovis (strain JB197) protein is Queuine tRNA-ribosyltransferase.